The primary structure comprises 259 residues: Pimeloyl-[acyl-carrier protein] methyl ester esterase (259 aa).

Positions 16–241 (FVMLHGWGMN…QSAHVPFISH (226 aa)) constitute an AB hydrolase-1 domain. Substrate-binding positions include Trp22, 82–83 (SM), and 143–147 (FLLLQ). Ser82 (nucleophile) is an active-site residue. Active-site residues include Asp207 and His235. His235 contributes to the substrate binding site.

The protein belongs to the AB hydrolase superfamily. Carboxylesterase BioH family. As to quaternary structure, monomer.

The protein resides in the cytoplasm. It catalyses the reaction 6-carboxyhexanoyl-[ACP] methyl ester + H2O = 6-carboxyhexanoyl-[ACP] + methanol + H(+). It functions in the pathway cofactor biosynthesis; biotin biosynthesis. Its function is as follows. The physiological role of BioH is to remove the methyl group introduced by BioC when the pimeloyl moiety is complete. It allows to synthesize pimeloyl-ACP via the fatty acid synthetic pathway through the hydrolysis of the ester bonds of pimeloyl-ACP esters. The protein is Pimeloyl-[acyl-carrier protein] methyl ester esterase of Hamiltonella defensa subsp. Acyrthosiphon pisum (strain 5AT).